The chain runs to 362 residues: Abnormal cell migration protein 13 (362 aa).

The N-terminal stretch at 1-20 is a signal peptide; that stretch reads MTKLLIALILFSICWKPYSA. Over 21-237 the chain is Extracellular; that stretch reads EPIASFFDGL…ELDPLTTVSG (217 aa). 2 disulfide bridges follow: cysteine 36/cysteine 68 and cysteine 98/cysteine 136. A CUB domain is found at 36-175; the sequence is CKARLDRRLT…KGFKLHWGSF (140 aa). The N-linked (GlcNAc...) asparagine glycan is linked to asparagine 63. N-linked (GlcNAc...) asparagine glycosylation is found at asparagine 145 and asparagine 161. One can recognise an LDL-receptor class A domain in the interval 182-225; sequence NCVTGEFSCGNGECIPIESACDRFADCSNGEDLIHSRQMAANCQ. 3 disulfide bridges follow: cysteine 183–cysteine 195, cysteine 190–cysteine 208, and cysteine 202–cysteine 224. The chain crosses the membrane as a helical span at residues 238–258; that stretch reads VFVLLFSATIILSLCGFIMFV. The Cytoplasmic segment spans residues 259–362; the sequence is CCLCKCLKST…VRNDVHRNLL (104 aa). The tract at residues 275–311 is disordered; the sequence is SSHTTTTTATDYKPDPPQFYPPSPPKMPPPSAASSYT. Residues 289-305 are compositionally biased toward pro residues; the sequence is DPPQFYPPSPPKMPPPS.

Interacts with abl-1 (via SH2 and SH3 domains); the interaction is direct. Interacts with sem-5; the interaction is direct. Expressed in pharyngeal-intestinal valve cells and ventral cord neurons.

It localises to the cell membrane. Its subcellular location is the perikaryon. The protein localises to the cell projection. The protein resides in the axon. It is found in the dendrite. Probable receptor that acts as an upstream signaling protein to promote the guidance, migration and positioning of the right Q neuroblast (QR) and its descendants along the anteroposterior body axis, and also the anterior migration of BDU interneurons during larval development. Associates with and recruits the downstream components tyrosine kinase abl-1 and the tyrosine kinase adapter protein sem-5 to the leading edge of migrating Q neuroblasts and their descendants to activate signaling through the two parallel wve-1 and wsp-1 pathways, respectively, and direct migration along the anteroposterior body axis. Involved in cytoskeleton dynamics regulating the organization of the actin cytoskeleton at the leading edge of migrating cells to ensure correct Q cell polarity and promote migration. Role in cytoskeleton organization may be by activation of the wve-1 and wsp-1 pathways which recruit the Arp2/3 complex to the leading edge of migrating cells. Plays a role in regulating the asymmetric distribution of the actin cytoskeleton-binding protein cor-1 in Q neuroblasts which is required for the anterior migration of QR neuroblasts. This chain is Abnormal cell migration protein 13, found in Caenorhabditis elegans.